A 116-amino-acid chain; its full sequence is Host transcription reprogramming factor 4 (116 aa).

An N-terminal signal peptide occupies residues 1–24; the sequence is MHIIHISKFMALLAISTIAIPTRG. Residues 24 to 53 are disordered; that stretch reads GRSEVDSRDVNQAQTVTSGSSIAPSGSEKR. A compositionally biased stretch (polar residues) spans 33–47; sequence VNQAQTVTSGSSIAP. A C2H2-type; degenerate zinc finger spans residues 74–96; the sequence is FQCPHCKDGISNRVALYTHVKAF.

Its subcellular location is the secreted. It localises to the host nucleus. Functionally, probable secreted effector that translocates into the nuclei of host cells to reprogram the expression of targeted genes by binding on effector binding elements in rice. The protein is Host transcription reprogramming factor 4 of Pyricularia oryzae (strain 70-15 / ATCC MYA-4617 / FGSC 8958) (Rice blast fungus).